Here is a 245-residue protein sequence, read N- to C-terminus: Eukaryotic translation initiation factor 6 (245 aa).

It belongs to the eIF-6 family. As to quaternary structure, monomer. Associates with the 60S ribosomal subunit.

It is found in the cytoplasm. The protein localises to the nucleus. Its subcellular location is the nucleolus. Its function is as follows. Binds to the 60S ribosomal subunit and prevents its association with the 40S ribosomal subunit to form the 80S initiation complex in the cytoplasm. May also be involved in ribosome biogenesis. The protein is Eukaryotic translation initiation factor 6 of Drosophila melanogaster (Fruit fly).